We begin with the raw amino-acid sequence, 121 residues long: SLLEFGKMILEETGKLAIPSYSSYGCYCGWGGKGTPKDATDRCCFVHDCCYGNLPDCNNKSKRYRYKKVNGAIVCEKGTSCENRICECDKAAAICFRQNLNTYSKKYMLYPDFLCKGELVC.

7 disulfides stabilise this stretch: Cys26-Cys115, Cys28-Cys44, Cys43-Cys95, Cys49-Cys121, Cys50-Cys88, Cys57-Cys81, and Cys75-Cys86. Residues Tyr27, Gly29, and Gly31 each coordinate Ca(2+). Residue His47 is part of the active site. Asp48 is a Ca(2+) binding site. Asp89 is a catalytic residue.

The cofactor is Ca(2+). As to expression, expressed by the venom gland.

Its subcellular location is the secreted. It catalyses the reaction a 1,2-diacyl-sn-glycero-3-phosphocholine + H2O = a 1-acyl-sn-glycero-3-phosphocholine + a fatty acid + H(+). In terms of biological role, snake venom phospholipase A2 (PLA2) that exhibits anticoagulant activity, probably by binding to factor X and its activated form factor Xa (F10). Shows no cytotoxicity. PLA2 catalyzes the calcium-dependent hydrolysis of the 2-acyl groups in 3-sn-phosphoglycerides. The polypeptide is Basic phospholipase A2 daboxin P (Daboia russelii (Russel's viper)).